A 158-amino-acid chain; its full sequence is 6,7-dimethyl-8-ribityllumazine synthase (158 aa).

Residues Phe22, 56 to 58 (ALE), and 80 to 82 (VVI) each bind 5-amino-6-(D-ribitylamino)uracil. 85–86 (ET) is a binding site for (2S)-2-hydroxy-3-oxobutyl phosphate. The active-site Proton donor is His88. Asn113 provides a ligand contact to 5-amino-6-(D-ribitylamino)uracil. Arg127 provides a ligand contact to (2S)-2-hydroxy-3-oxobutyl phosphate.

This sequence belongs to the DMRL synthase family.

The catalysed reaction is (2S)-2-hydroxy-3-oxobutyl phosphate + 5-amino-6-(D-ribitylamino)uracil = 6,7-dimethyl-8-(1-D-ribityl)lumazine + phosphate + 2 H2O + H(+). It participates in cofactor biosynthesis; riboflavin biosynthesis; riboflavin from 2-hydroxy-3-oxobutyl phosphate and 5-amino-6-(D-ribitylamino)uracil: step 1/2. Functionally, catalyzes the formation of 6,7-dimethyl-8-ribityllumazine by condensation of 5-amino-6-(D-ribitylamino)uracil with 3,4-dihydroxy-2-butanone 4-phosphate. This is the penultimate step in the biosynthesis of riboflavin. This chain is 6,7-dimethyl-8-ribityllumazine synthase, found in Neisseria meningitidis serogroup C / serotype 2a (strain ATCC 700532 / DSM 15464 / FAM18).